The primary structure comprises 307 residues: Pseudouridine-5'-phosphate glycosidase (307 aa).

Catalysis depends on E25, which acts as the Proton donor. The substrate site is built by K86 and V106. D138 contributes to the Mn(2+) binding site. A substrate-binding site is contributed by 140-142 (SAD). The active-site Nucleophile is K159.

The protein belongs to the pseudouridine-5'-phosphate glycosidase family. As to quaternary structure, homotrimer. The cofactor is Mn(2+).

It carries out the reaction D-ribose 5-phosphate + uracil = psi-UMP + H2O. In terms of biological role, catalyzes the reversible cleavage of pseudouridine 5'-phosphate (PsiMP) to ribose 5-phosphate and uracil. Functions biologically in the cleavage direction, as part of a pseudouridine degradation pathway. The protein is Pseudouridine-5'-phosphate glycosidase of Caldanaerobacter subterraneus subsp. tengcongensis (strain DSM 15242 / JCM 11007 / NBRC 100824 / MB4) (Thermoanaerobacter tengcongensis).